A 365-amino-acid polypeptide reads, in one-letter code: Elongation factor Tu (365 aa).

GTP is bound by residues 1–7 (HVDHGKT), 62–66 (DCPGH), and 117–120 (NKCD). The 185-residue stretch at 1–185 (HVDHGKTTLT…ILDTYIPEPK (185 aa)) folds into the tr-type G domain. Thr7 serves as a coordination point for Mg(2+).

The protein belongs to the TRAFAC class translation factor GTPase superfamily. Classic translation factor GTPase family. EF-Tu/EF-1A subfamily. In terms of assembly, monomer.

The protein resides in the cytoplasm. The catalysed reaction is GTP + H2O = GDP + phosphate + H(+). GTP hydrolase that promotes the GTP-dependent binding of aminoacyl-tRNA to the A-site of ribosomes during protein biosynthesis. The chain is Elongation factor Tu from Buchnera aphidicola subsp. Melaphis rhois.